The primary structure comprises 151 residues: UPF0208 membrane protein YfbV (151 aa).

Helical transmembrane passes span 46-65 (YAIRFMPPIAVFTLCWQIAL) and 69-91 (LGPAVATALFALSLPMQGLWWLG).

Belongs to the UPF0208 family.

It localises to the cell inner membrane. This is UPF0208 membrane protein YfbV from Escherichia coli O1:K1 / APEC.